The chain runs to 539 residues: Chaperonin GroEL (539 aa).

ATP is bound by residues 29-32 (TLGP), 86-90 (DGTTT), G413, and D492.

This sequence belongs to the chaperonin (HSP60) family. As to quaternary structure, forms a cylinder of 14 subunits composed of two heptameric rings stacked back-to-back. Interacts with the co-chaperonin GroES.

Its subcellular location is the cytoplasm. It carries out the reaction ATP + H2O + a folded polypeptide = ADP + phosphate + an unfolded polypeptide.. Together with its co-chaperonin GroES, plays an essential role in assisting protein folding. The GroEL-GroES system forms a nano-cage that allows encapsulation of the non-native substrate proteins and provides a physical environment optimized to promote and accelerate protein folding. The polypeptide is Chaperonin GroEL (Fusobacterium nucleatum subsp. nucleatum (strain ATCC 25586 / DSM 15643 / BCRC 10681 / CIP 101130 / JCM 8532 / KCTC 2640 / LMG 13131 / VPI 4355)).